A 205-amino-acid polypeptide reads, in one-letter code: Ribosomal RNA small subunit methyltransferase G (205 aa).

Residues Gly73, Leu78, 124-125, and Arg138 contribute to the S-adenosyl-L-methionine site; that span reads VE.

The protein belongs to the methyltransferase superfamily. RNA methyltransferase RsmG family.

The protein resides in the cytoplasm. The enzyme catalyses guanosine(527) in 16S rRNA + S-adenosyl-L-methionine = N(7)-methylguanosine(527) in 16S rRNA + S-adenosyl-L-homocysteine. In terms of biological role, specifically methylates the N7 position of guanine in position 527 of 16S rRNA. The protein is Ribosomal RNA small subunit methyltransferase G of Actinobacillus pleuropneumoniae serotype 5b (strain L20).